A 147-amino-acid chain; its full sequence is UPF0306 protein YhbP (147 aa).

The protein belongs to the UPF0306 family.

This chain is UPF0306 protein YhbP, found in Escherichia coli O8 (strain IAI1).